Here is a 297-residue protein sequence, read N- to C-terminus: Nicotinate-nucleotide pyrophosphorylase [carboxylating] (297 aa).

Pro-2 carries the blocked amino end (Pro) modification. Substrate-binding positions include Arg-119, 152-154 (TRK), Arg-176, Lys-186, Glu-215, Asp-236, 259-261 (SGN), and 280-282 (VGA).

It belongs to the NadC/ModD family. Hexamer formed by 3 homodimers. Homodimer.

The enzyme catalyses nicotinate beta-D-ribonucleotide + CO2 + diphosphate = quinolinate + 5-phospho-alpha-D-ribose 1-diphosphate + 2 H(+). The protein operates within cofactor biosynthesis; NAD(+) biosynthesis; nicotinate D-ribonucleotide from quinolinate: step 1/1. In terms of biological role, involved in the catabolism of quinolinic acid (QA). The polypeptide is Nicotinate-nucleotide pyrophosphorylase [carboxylating] (nadC) (Salmonella typhimurium (strain LT2 / SGSC1412 / ATCC 700720)).